Consider the following 411-residue polypeptide: Translation initiation factor 2 subunit gamma (411 aa).

A tr-type G domain is found at 9-203 (QAEVNIGMVG…AIEEFIPTPK (195 aa)). The G1 stretch occupies residues 18–25 (GHVDHGKT). Positions 21, 25, 46, and 48 each coordinate Mg(2+). 21 to 26 (DHGKTT) provides a ligand contact to GTP. The G2 stretch occupies residues 46–50 (GITIK). Zn(2+) is bound by residues Cys-61, Cys-64, Cys-73, and Cys-76. The segment at 90–93 (DSPG) is G3. GTP is bound by residues 146–149 (NKIE) and 181–183 (SAL). Residues 146–149 (NKIE) form a G4 region. The segment at 181 to 183 (SAL) is G5.

This sequence belongs to the TRAFAC class translation factor GTPase superfamily. Classic translation factor GTPase family. EIF2G subfamily. In terms of assembly, heterotrimer composed of an alpha, a beta and a gamma chain. Requires Mg(2+) as cofactor.

It carries out the reaction GTP + H2O = GDP + phosphate + H(+). In terms of biological role, eIF-2 functions in the early steps of protein synthesis by forming a ternary complex with GTP and initiator tRNA. This chain is Translation initiation factor 2 subunit gamma, found in Pyrococcus furiosus (strain ATCC 43587 / DSM 3638 / JCM 8422 / Vc1).